Reading from the N-terminus, the 333-residue chain is Ketol-acid reductoisomerase (NADP(+)) (333 aa).

The region spanning Met1–Thr179 is the KARI N-terminal Rossmann domain. Residues Tyr22–Gln25, Lys45, Ser48, Ser50, and Asp80–Gln83 contribute to the NADP(+) site. His105 is an active-site residue. Gly131 contacts NADP(+). The 146-residue stretch at Thr180–Val325 folds into the KARI C-terminal knotted domain. 4 residues coordinate Mg(2+): Asp188, Glu192, Glu224, and Glu228. Residue Ser249 participates in substrate binding.

This sequence belongs to the ketol-acid reductoisomerase family. Mg(2+) is required as a cofactor.

The enzyme catalyses (2R)-2,3-dihydroxy-3-methylbutanoate + NADP(+) = (2S)-2-acetolactate + NADPH + H(+). The catalysed reaction is (2R,3R)-2,3-dihydroxy-3-methylpentanoate + NADP(+) = (S)-2-ethyl-2-hydroxy-3-oxobutanoate + NADPH + H(+). It functions in the pathway amino-acid biosynthesis; L-isoleucine biosynthesis; L-isoleucine from 2-oxobutanoate: step 2/4. Its pathway is amino-acid biosynthesis; L-valine biosynthesis; L-valine from pyruvate: step 2/4. Functionally, involved in the biosynthesis of branched-chain amino acids (BCAA). Catalyzes an alkyl-migration followed by a ketol-acid reduction of (S)-2-acetolactate (S2AL) to yield (R)-2,3-dihydroxy-isovalerate. In the isomerase reaction, S2AL is rearranged via a Mg-dependent methyl migration to produce 3-hydroxy-3-methyl-2-ketobutyrate (HMKB). In the reductase reaction, this 2-ketoacid undergoes a metal-dependent reduction by NADPH to yield (R)-2,3-dihydroxy-isovalerate. The polypeptide is Ketol-acid reductoisomerase (NADP(+)) (Mycobacterium avium).